Here is a 481-residue protein sequence, read N- to C-terminus: Adenosylhomocysteinase (481 aa).

The substrate site is built by Thr65, Asp140, and Glu200. 201-203 (TTT) lines the NAD(+) pocket. Residues Lys230 and Asp234 each contribute to the substrate site. NAD(+)-binding positions include Asn235, 264 to 269 (GYGDVG), Glu287, Asn322, 343 to 345 (IGH), and Asn393.

Belongs to the adenosylhomocysteinase family. Requires NAD(+) as cofactor.

It is found in the cytoplasm. It catalyses the reaction S-adenosyl-L-homocysteine + H2O = L-homocysteine + adenosine. The protein operates within amino-acid biosynthesis; L-homocysteine biosynthesis; L-homocysteine from S-adenosyl-L-homocysteine: step 1/1. Functionally, may play a key role in the regulation of the intracellular concentration of adenosylhomocysteine. The protein is Adenosylhomocysteinase of Polynucleobacter asymbioticus (strain DSM 18221 / CIP 109841 / QLW-P1DMWA-1) (Polynucleobacter necessarius subsp. asymbioticus).